The sequence spans 311 residues: Aquaporin NIP3-1 (311 aa).

Residues 1 to 34 form a disordered region; sequence MEMAAPNGGGAAGMSSPVNGASAPATPGTPAPLF. Residues 20 to 34 show a composition bias toward low complexity; that stretch reads GASAPATPGTPAPLF. Helical transmembrane passes span 85-105 and 111-131; these read LGAE…APIV and GAIS…TIIL. The short motif at 142-144 is the NPA 1 element; that stretch reads NPS. 3 helical membrane-spanning segments follow: residues 158-178, 202-222, and 226-246; these read LQVP…GFAL, AFFT…AVAT, and AVGE…ILIA. An NPA 2 motif is present at residues 255–257; it reads NPV. A helical membrane pass occupies residues 273–293; the sequence is WIYLIAPTLGAVAGAGVYTAV.

Belongs to the MIP/aquaporin (TC 1.A.8) family. NIP (TC 1.A.8.12) subfamily. As to expression, expressed in roots and leaves.

It localises to the membrane. Functionally, aquaporins facilitate the transport of water and small neutral solutes across cell membranes. The chain is Aquaporin NIP3-1 (NIP3-1) from Oryza sativa subsp. japonica (Rice).